Reading from the N-terminus, the 390-residue chain is Succinate--CoA ligase [ADP-forming] subunit beta (390 aa).

Residues 9-245 enclose the ATP-grasp domain; the sequence is KHLLKKYNIP…TTQEDEHETM (237 aa). Residues lysine 46, 53 to 55, glutamate 99, serine 102, and glutamate 107 each bind ATP; that span reads GRG. Positions 200 and 214 each coordinate Mg(2+). Residues asparagine 265 and 322-324 each bind substrate; that span reads GIV.

Belongs to the succinate/malate CoA ligase beta subunit family. In terms of assembly, heterotetramer of two alpha and two beta subunits. Mg(2+) is required as a cofactor.

The catalysed reaction is succinate + ATP + CoA = succinyl-CoA + ADP + phosphate. It catalyses the reaction GTP + succinate + CoA = succinyl-CoA + GDP + phosphate. The protein operates within carbohydrate metabolism; tricarboxylic acid cycle; succinate from succinyl-CoA (ligase route): step 1/1. In terms of biological role, succinyl-CoA synthetase functions in the citric acid cycle (TCA), coupling the hydrolysis of succinyl-CoA to the synthesis of either ATP or GTP and thus represents the only step of substrate-level phosphorylation in the TCA. The beta subunit provides nucleotide specificity of the enzyme and binds the substrate succinate, while the binding sites for coenzyme A and phosphate are found in the alpha subunit. This Coxiella burnetii (strain Dugway 5J108-111) protein is Succinate--CoA ligase [ADP-forming] subunit beta.